The primary structure comprises 237 residues: MAKDTTGRMRVTVKSGGRMKLSSKLWLERQLNDPYVAQAKRDGYRSRAAYKLTEIDDKFRLLKSGMAVVDLGAAPGGWSQVAAKKVGAADGRGKVVAIDLLEMGEVPGVTFAQLDFLDPSAPERLREMLGGGADIVMSDMAANTTGHRKTDQLRIVGLVETAAMFASEVLKPGGTFLAKVFQSGADASLMTELKRDYASVKHVKPAASRKDSSERYLLATGFRGGAARDAEAAAEAE.

G76, W78, D99, D115, and D139 together coordinate S-adenosyl-L-methionine. K179 (proton acceptor) is an active-site residue.

Belongs to the class I-like SAM-binding methyltransferase superfamily. RNA methyltransferase RlmE family.

The protein localises to the cytoplasm. The catalysed reaction is uridine(2552) in 23S rRNA + S-adenosyl-L-methionine = 2'-O-methyluridine(2552) in 23S rRNA + S-adenosyl-L-homocysteine + H(+). In terms of biological role, specifically methylates the uridine in position 2552 of 23S rRNA at the 2'-O position of the ribose in the fully assembled 50S ribosomal subunit. This chain is Ribosomal RNA large subunit methyltransferase E, found in Rhodopseudomonas palustris (strain TIE-1).